We begin with the raw amino-acid sequence, 503 residues long: Proton-coupled zinc antiporter SLC30A1 (503 aa).

Residues 1–10 (MGCWGRNRGR) lie on the Cytoplasmic side of the membrane. Residues 11 to 31 (LLCMLLLTFMFMVLEVVVSRV) form a helical membrane-spanning segment. The Extracellular portion of the chain corresponds to 32–35 (TASL). The chain crosses the membrane as a helical span at residues 36-56 (AMLSDSFHMLSDVLALVVALV). Residues histidine 43 and aspartate 47 each contribute to the Zn(2+) site. Residues 57 to 78 (AERFARRTHATQKNTFGWIRAE) lie on the Cytoplasmic side of the membrane. A helical transmembrane segment spans residues 79 to 99 (VMGALVNAIFLTGLCFAILLE). Residues 100 to 113 (AVERFIEPHEMQQP) lie on the Extracellular side of the membrane. A helical transmembrane segment spans residues 114-134 (LVVLSVGVAGLLVNVLGLCLF). At 135–243 (HHHSGEGQGA…RAGQLNMRGV (109 aa)) the chain is on the cytoplasmic side. The segment at 140-213 (EGQGAGHGHS…PEKLRSDDPV (74 aa)) is disordered. The segment at 145–156 (GHGHSHGHGHGH) is 6 X 2 AA approximate repeats of H-G. The segment covering 147–165 (GHSHGHGHGHLAKGARKAG) has biased composition (basic residues). Residues 184-196 (TNTLVANTSNSNG) show a composition bias toward polar residues. Residues 200 to 211 (DQAEPEKLRSDD) are compositionally biased toward basic and acidic residues. A helical membrane pass occupies residues 244 to 264 (FLHVLGDALGSVIVVVNALVF). The Zn(2+) site is built by histidine 246 and aspartate 250. Over 265 to 303 (YFNWKGCTEDDFCTNPCFPDPCKSSVEIINSTQAPMRDA) the chain is Extracellular. Residue asparagine 294 is glycosylated (N-linked (GlcNAc...) asparagine). A helical membrane pass occupies residues 304–324 (GPCWVLYLDPTLCIIMVCILL). The Cytoplasmic segment spans residues 325 to 503 (YTTYPLLKES…VPNKQPESSL (179 aa)). Serine 502 bears the Phosphoserine mark.

Belongs to the cation diffusion facilitator (CDF) transporter (TC 2.A.4) family. SLC30A subfamily. In terms of assembly, homodimer. Interacts with TMEM163. Interacts and forms a complex with TMC6 and TMC8; the interaction regulates zinc transport into the ER. As to expression, widely expressed.

The protein localises to the cell membrane. Its subcellular location is the basolateral cell membrane. The protein resides in the cytoplasmic vesicle membrane. It is found in the cytoplasm. It localises to the endoplasmic reticulum membrane. The protein localises to the golgi apparatus membrane. Its subcellular location is the nucleus membrane. The catalysed reaction is Zn(2+)(in) + 2 H(+)(out) = Zn(2+)(out) + 2 H(+)(in). Functionally, zinc ion:proton antiporter that could function at the plasma membrane mediating zinc efflux from cells against its electrochemical gradient protecting them from intracellular zinc accumulation and toxicity. Alternatively, could prevent the transport to the plasma membrane of CACNB2, the L-type calcium channels regulatory subunit, through a yet to be defined mechanism. By modulating the expression of these channels at the plasma membrane, could prevent calcium and zinc influx into cells. By the same mechanism, could also prevent L-type calcium channels-mediated heavy metal influx into cells. In some cells, could also function as a zinc ion:proton antiporter mediating zinc entry into the lumen of cytoplasmic vesicles. In macrophages, can increase zinc ions concentration into the lumen of cytoplasmic vesicles containing engulfed bacteria and could help inactivate them. Forms a complex with TMC6/EVER1 and TMC8/EVER2 at the ER membrane of keratynocytes which facilitates zinc uptake into the ER. Down-regulates the activity of transcription factors induced by zinc and cytokines. This is Proton-coupled zinc antiporter SLC30A1 from Mus musculus (Mouse).